An 841-amino-acid chain; its full sequence is Axin-1 (841 aa).

The tract at residues 1–78 is disordered; the sequence is MNIQGKGFPL…GYEPEGSASP (78 aa). A compositionally biased stretch (polar residues) spans 44–61; it reads FYSSKSDAVRNETSTATP. One can recognise an RGS domain in the interval 88–211; the sequence is SLHSLLDDQD…LKSDIYLEYT (124 aa). The segment at 217 to 269 is disordered; that stretch reads SPKIYSDPSSGSGTGKGLPGYLPTLNEDEEWKCDQDTEPEASRDSAPSSRLTQ. Positions 248–259 are enriched in basic and acidic residues; it reads KCDQDTEPEASR. Residues 348-433 form an interaction with GSK3B region; it reads LRKQHRREMQ…DADISSGPSV (86 aa). The segment at 434–508 is interaction with beta-catenin; that stretch reads ISHKMPSAQP…RSPESGHLGK (75 aa). 3 disordered regions span residues 482 to 527, 613 to 635, and 727 to 756; these read KTPG…TTKS, NIKKTDSGKSDGANYEMPGSPED, and RRLEEEEKRAGKLPLKQRLKPQKRPGSGAS. A compositionally biased stretch (basic and acidic residues) spans 727–736; that stretch reads RRLEEEEKRA. In terms of domain architecture, DIX spans 759 to 841; sequence CENIVVAYYF…KIIGKVEKID (83 aa).

In terms of assembly, homodimer. ADP-ribosylated by tankyrase TNKS and TNKS2. Poly-ADP-ribosylated protein is recognized by RNF146, followed by ubiquitination at 'Lys-48' and subsequent activation of the Wnt signaling pathway. Post-translationally, ubiquitinated by RNF146 when poly-ADP-ribosylated, leading to its degradation and subsequent activation of the Wnt signaling pathway.

It is found in the cytoplasm. The protein localises to the nucleus. The protein resides in the membrane. It localises to the cell membrane. In terms of biological role, component of the beta-catenin destruction complex required for regulating CTNNB1 levels through phosphorylation and ubiquitination, and modulating Wnt-signaling. Controls dorsoventral patterning via two opposing effects; down-regulates CTNNB1 to inhibit the Wnt signaling pathway and ventralize embryos, but also dorsalizes embryos by activating a Wnt-independent JNK signaling pathway. The sequence is that of Axin-1 (AXIN1) from Gallus gallus (Chicken).